The primary structure comprises 1826 residues: ATPase family AAA domain-containing protein 5 (1826 aa).

Phosphoserine is present on serine 44. Lysine 127 is covalently cross-linked (Glycyl lysine isopeptide (Lys-Gly) (interchain with G-Cter in SUMO2)). Disordered stretches follow at residues 170–254 (SIED…KRAD), 282–311 (PAVP…CEPS), 323–367 (AQVH…RKSN), 398–572 (QQFM…EPGS), 588–623 (RSCS…ARTS), 647–684 (KFTR…TSKN), and 709–729 (VVPL…KSPE). Residue serine 215 is modified to Phosphoserine. A compositionally biased stretch (basic and acidic residues) spans 243–254 (NDSRTHATKRAD). Residues 298–311 (SGSEGELSGSCEPS) show a composition bias toward low complexity. Serine 351 and serine 366 each carry phosphoserine. Residues 365 to 381 (KSNVVIQEGQLELAVLE) are interaction with WDR48. The span at 418 to 442 (KPLEKQKDPSEKSVHEGDSSSEKII) shows a compositional bias: basic and acidic residues. Residues 445–456 (PNIQRVSSQGCL) show a composition bias toward polar residues. Residues 459-468 (HADRGSFPKE) show a composition bias toward basic and acidic residues. The span at 469 to 481 (KSKKPNKKGKKTR) shows a compositional bias: basic residues. Basic and acidic residues predominate over residues 487–505 (NREENIQKEKTAFSLKDEQ). A compositionally biased stretch (polar residues) spans 540–559 (DSVQMSLCNRNKSRSSSTPT). Residues serine 591 and serine 603 each carry the phosphoserine modification. Serine 727 and serine 801 each carry phosphoserine. Positions 965–1034 (GKQASPQLQP…NLDPSRDSGT (70 aa)) are disordered. Over residues 1006–1019 (EEMKGRSKDLDERI) the composition is skewed to basic and acidic residues. The residue at position 1104 (serine 1104) is a Phosphoserine. 1119–1126 (GPTGVGKT) serves as a coordination point for ATP. A disordered region spans residues 1183–1216 (YNIGKSPKKLNSPGKVVTSPRKLPPSSPKTSGQK). The LXCXE motif signature appears at 1415-1419 (LVCSE). Disordered regions lie at residues 1527 to 1552 (PASM…RKQK) and 1592 to 1611 (SNPE…VPQP). An interaction with RAD51 and RFC5 region spans residues 1612–1701 (PKTLAEKKCC…ATAEALSFTE (90 aa)).

The protein belongs to the AAA ATPase family. In terms of assembly, component of a heteropentameric replication factor ATAD5 RFC-like complex composed of one large subunit (ATAD5) and four small subunits (RFC2, RFC3, RFC4 and RFC5). Within the ATAD5 RFC-like complex, interacts with RFC2, RFC4 and RFC5. Within the ATAD5 RFC-like complex, interacts directly via-N terminal with RAD51; the interactions is enhanced under replication stress. Interacts with RB1 predominantly in G1 phase via its LXCXE motif. Interacts with RAD9A in growing cells. The interaction with RAD9A is reduced after exposure to DNA replication-inhibiting agents. Interacts with BRD4. Interacts with PCNA. Interacts with deubiquitinating enzyme USP1, and its associated factor, WDR48. Post-translationally, ATR may stimulate the RAD9A dissociation. As to expression, expressed ubiquitously in all cell lines like teratocarcinoma, cell lymphoma, lymphoma.

Its subcellular location is the nucleus. Functionally, has an important role in DNA replication and in maintaining genome integrity during replication stress. Involved in a RAD9A-related damage checkpoint, a pathway that is important in determining whether DNA damage is compatible with cell survival or whether it requires cell elimination by apoptosis. Modulates the RAD9A interaction with BCL2 and thereby induces DNA damage-induced apoptosis. Promotes PCNA deubiquitination by recruiting the ubiquitin-specific protease 1 (USP1) and WDR48 thereby down-regulating the error-prone damage bypass pathway. As component of the ATAD5 RFC-like complex, regulates the function of the DNA polymerase processivity factor PCNA by unloading the ring-shaped PCNA homotrimer from DNA after replication during the S phase of the cell cycle. This seems to be dependent on its ATPase activity. Plays important roles in restarting stalled replication forks under replication stress, by unloading the PCNA homotrimer from DNA and recruiting RAD51 possibly through an ATR-dependent manner. Ultimately this enables replication fork regression, breakage, and eventual fork restart. Both the PCNA unloading activity and the interaction with WDR48 are required to efficiently recruit RAD51 to stalled replication forks. Promotes the generation of MUS81-mediated single-stranded DNA-associated breaks in response to replication stress, which is an alternative pathway to restart stalled/regressed replication forks. In Mus musculus (Mouse), this protein is ATPase family AAA domain-containing protein 5 (Atad5).